The sequence spans 451 residues: uncharacterized protein (451 aa).

An N-terminal signal peptide occupies residues 1-18; that stretch reads MRTRITLALAVLLLLLAG. Cysteine 19 is lipidated: N-palmitoyl cysteine. Residue cysteine 19 is the site of S-diacylglycerol cysteine attachment. Residues 424–451 are disordered; it reads TSADPPPGVPRAGKRNIRDATSRLPSTP.

The protein resides in the cell membrane. Functionally, may participate in oleandomycin glycosylation and secretion during antibiotic production. This is an uncharacterized protein from Streptomyces antibioticus.